A 371-amino-acid chain; its full sequence is MNKLPHETRVVIGMSGGVDSSVAALLLKEQGYDVIGIFMKNWDDTDENGVCTATEDYNDVIEVCNQIGIPYYAVNFEKQYWDKVFTYFLDEYRAGRTPNPDVMCNKEIKFKAFLEHAIALGADYVATGHYARVAYMDGEYKMLRGVDDNKDQTYFLNQLSQEQLSKTMFPLGELKKPQIREMAKEAGLATAAKKDSTGICFIGERNFKDFLSNYLPAQPGVMQTLSGEVKGKHDGLMYYTIGQRHGLGIGGNGDPWFAVGKNLKENILYVDQGFHNELLYGDEVIATNVGWVSNKEKETEFKCTAKFRYRQEDNKVTVQIVDENTVRILCDEPIRAITPGQAVVFYDGDECLGGATIDEVYRSGKKLDYLG.

Residues 13 to 20 (GMSGGVDS) and methionine 39 contribute to the ATP site. The interval 99 to 101 (NPD) is interaction with target base in tRNA. Cysteine 104 (nucleophile) is an active-site residue. Cysteine 104 and cysteine 200 are disulfide-bonded. Glycine 128 contributes to the ATP binding site. Residues 150-152 (KDQ) form an interaction with tRNA region. The active-site Cysteine persulfide intermediate is the cysteine 200. The interval 308-309 (RY) is interaction with tRNA.

This sequence belongs to the MnmA/TRMU family.

The protein resides in the cytoplasm. The enzyme catalyses S-sulfanyl-L-cysteinyl-[protein] + uridine(34) in tRNA + AH2 + ATP = 2-thiouridine(34) in tRNA + L-cysteinyl-[protein] + A + AMP + diphosphate + H(+). Its function is as follows. Catalyzes the 2-thiolation of uridine at the wobble position (U34) of tRNA, leading to the formation of s(2)U34. This Bacillus cereus (strain ATCC 14579 / DSM 31 / CCUG 7414 / JCM 2152 / NBRC 15305 / NCIMB 9373 / NCTC 2599 / NRRL B-3711) protein is tRNA-specific 2-thiouridylase MnmA.